We begin with the raw amino-acid sequence, 1008 residues long: RNA cytidine acetyltransferase (1008 aa).

ATP is bound by residues 282–291 and Arg443; that span reads GRGKSAALGL. The region spanning 531–713 is the N-acetyltransferase domain; it reads CLLGPVQRMD…VPVYLSQKSN (183 aa). Residues 601–603, 608–614, and Asn700 each bind acetyl-CoA; these read VAT and QRMGYGK. Phosphoserine is present on Ser907. The tract at residues 950–1008 is disordered; the sequence is ALETNGTGGGSGLLSVKSGVKRLDGPIETREDGDLAAPLSKKKKKNNPKQRRSQGKSLI. Residues 970–982 show a composition bias toward basic and acidic residues; the sequence is KRLDGPIETREDG. Basic residues predominate over residues 989 to 1008; that stretch reads SKKKKKNNPKQRRSQGKSLI.

Belongs to the RNA cytidine acetyltransferase family. NAT10 subfamily. In terms of assembly, component of the PRC1 complex (PSC, PC, PH and dRING1) in 0-12 hours Drosophila embryos. This complex is distinct from the Esc/E(z) complex, which contains many other PcG proteins like Esc, E(z), Su(z)12, HDAC1/Rpd3, Caf1-55 and probably Pho. The two complexes however cooperate and interact together during the first 3 hours of development to establish PcG silencing. Part of the small subunit (SSU) processome, composed of more than 70 proteins and the RNA chaperone small nucleolar RNA (snoRNA) U3.

The protein resides in the nucleus. Its subcellular location is the nucleolus. The enzyme catalyses a cytidine in 18S rRNA + acetyl-CoA + ATP + H2O = an N(4)-acetylcytidine in 18S rRNA + ADP + phosphate + CoA + H(+). The catalysed reaction is a cytidine in tRNA + acetyl-CoA + ATP + H2O = an N(4)-acetylcytidine in tRNA + ADP + phosphate + CoA + H(+). RNA cytidine acetyltransferase with specificity toward both 18S rRNA and tRNAs. Catalyzes the formation of N(4)-acetylcytidine (ac4C) in 18S rRNA. Required for early nucleolar cleavages of precursor rRNA at sites A0, A1 and A2 during 18S rRNA synthesis. Catalyzes the formation of ac4C in serine and leucine tRNAs. Requires a tRNA-binding adapter protein for full tRNA acetyltransferase activity but not for 18S rRNA acetylation. Polycomb group (PcG) protein. PcG proteins act by forming multiprotein complexes, which are required to maintain the transcriptionally repressive state of homeotic genes throughout development. PcG proteins are not required to initiate repression, but to maintain it during later stages of development. They probably act via the methylation of histones, rendering chromatin heritably changed in its expressibility. Part of the small subunit (SSU) processome, first precursor of the small eukaryotic ribosomal subunit. During the assembly of the SSU processome in the nucleolus, many ribosome biogenesis factors, an RNA chaperone and ribosomal proteins associate with the nascent pre-rRNA and work in concert to generate RNA folding, modifications, rearrangements and cleavage as well as targeted degradation of pre-ribosomal RNA by the RNA exosome. The chain is RNA cytidine acetyltransferase (l(1)G0020) from Drosophila melanogaster (Fruit fly).